The following is a 299-amino-acid chain: Recombination-associated protein RdgC (299 aa).

Belongs to the RdgC family.

It localises to the cytoplasm. Its subcellular location is the nucleoid. In terms of biological role, may be involved in recombination. This chain is Recombination-associated protein RdgC, found in Neisseria meningitidis serogroup A / serotype 4A (strain DSM 15465 / Z2491).